The chain runs to 122 residues: Large ribosomal subunit protein uL14 (122 aa).

Belongs to the universal ribosomal protein uL14 family. As to quaternary structure, part of the 50S ribosomal subunit. Forms a cluster with proteins L3 and L19. In the 70S ribosome, L14 and L19 interact and together make contacts with the 16S rRNA in bridges B5 and B8.

Functionally, binds to 23S rRNA. Forms part of two intersubunit bridges in the 70S ribosome. The polypeptide is Large ribosomal subunit protein uL14 (Rickettsia rickettsii (strain Iowa)).